A 461-amino-acid chain; its full sequence is CUGBP Elav-like family member 3 (461 aa).

RRM domains follow at residues 7 to 88 and 95 to 175; these read IKLF…PADS and RKLF…FADT. Over residues 345–358 the composition is skewed to pro residues; the sequence is PPALVAQQPPPPPQ. A disordered region spans residues 345-375; that stretch reads PPALVAQQPPPPPQQQQQQQQQQQQREGPDG. The span at 359 to 369 shows a compositional bias: low complexity; it reads QQQQQQQQQQQ. In terms of domain architecture, RRM 3 spans 376 to 454; the sequence is CNIFIYHLPQ…KRLKVQLKRP (79 aa).

Belongs to the CELF/BRUNOL family.

Its subcellular location is the nucleus. It is found in the cytoplasm. RNA-binding protein involved in the regulation of pre-mRNA alternative splicing. Mediates exon inclusion and/or exclusion in pre-mRNA that are subject to tissue-specific and developmentally regulated alternative splicing. Specifically activates exon 5 inclusion of cardiac isoforms of TNNT2 during heart remodeling at the juvenile to adult transition. Activates the splicing of MAPT/Tau exon 10. Binds to muscle-specific splicing enhancer (MSE) intronic sites flanking the alternative exon 5 of TNNT2 pre-mRNA. The protein is CUGBP Elav-like family member 3 (CELF3) of Bos taurus (Bovine).